We begin with the raw amino-acid sequence, 1365 residues long: ATP-dependent RNA helicase DHX29 (1365 aa).

Basic residues predominate over residues 1–10; the sequence is MGGKNKKHKA. Disordered stretches follow at residues 1-74, 174-222, and 235-257; these read MGGK…NDSG, SQEF…EETT, and AEQQ…EKFD. Composition is skewed to low complexity over residues 11–36 and 43–53; these read PGAA…VGEA and ARPAPAVPTGA. A phosphoserine mark is found at serine 69, serine 190, and serine 198. The span at 187-203 shows a compositional bias: polar residues; that stretch reads KFQSVQIQATLSPPQQT. Basic and acidic residues predominate over residues 206–222; it reads KRQEEDPKIKPKKEETT. Residues 281–308 are a coiled coil; that stretch reads LEKNKQGQKEAQEKIRKFQREMETLEDH. The disordered stretch occupies residues 500–524; it reads QQQQQQQQRPESEKGGSEDPEESWE. The 174-residue stretch at 581 to 754 folds into the Helicase ATP-binding domain; it reads VETLKRHRVV…FTHCPILRIS (174 aa). 594–601 contributes to the ATP binding site; that stretch reads GETGSGKS. Positions 701–704 match the DEAH box motif; that stretch reads DEVH. The 178-residue stretch at 848–1025 folds into the Helicase C-terminal domain; the sequence is LILELLVYLD…ELCLHIMKCD (178 aa).

The protein belongs to the DEAD box helicase family. DEAH subfamily. In terms of assembly, part of the 43S pre-initiation complex (PIC) that contains at least Met-tRNA, EIF1, EIF1A (EIF1AX or EIF1AY), EIF2S1, EIF2S2, EIF2S3, EIF3A, EIF3B, EIF3C, EIF3D, EIF3E, EIF3F, EIF3G, EIF3H, EIF3I, EIF3J, EIF3K, EIF3L, EIF3M, DHX29 and the 40S ribosomal subunit.

The protein resides in the cytoplasm. The enzyme catalyses ATP + H2O = ADP + phosphate + H(+). Its function is as follows. ATP-binding RNA helicase involved in translation initiation. Part of the 43S pre-initiation complex that is required for efficient initiation on mRNAs of higher eukaryotes with structured 5'-UTRs by promoting efficient NTPase-dependent 48S complex formation. Specifically binds to the 40S ribosome near the mRNA entrance. Does not possess a processive helicase activity. The chain is ATP-dependent RNA helicase DHX29 from Mus musculus (Mouse).